We begin with the raw amino-acid sequence, 334 residues long: Biotin synthase (334 aa).

A Radical SAM core domain is found at 55–280; that stretch reads EEIEVEGIIS…HTMLRFAGGR (226 aa). C70, C74, and C77 together coordinate [4Fe-4S] cluster. Residues C113, C205, and R275 each coordinate [2Fe-2S] cluster.

The protein belongs to the radical SAM superfamily. Biotin synthase family. As to quaternary structure, homodimer. The cofactor is [4Fe-4S] cluster. [2Fe-2S] cluster serves as cofactor.

The catalysed reaction is (4R,5S)-dethiobiotin + (sulfur carrier)-SH + 2 reduced [2Fe-2S]-[ferredoxin] + 2 S-adenosyl-L-methionine = (sulfur carrier)-H + biotin + 2 5'-deoxyadenosine + 2 L-methionine + 2 oxidized [2Fe-2S]-[ferredoxin]. It functions in the pathway cofactor biosynthesis; biotin biosynthesis; biotin from 7,8-diaminononanoate: step 2/2. Functionally, catalyzes the conversion of dethiobiotin (DTB) to biotin by the insertion of a sulfur atom into dethiobiotin via a radical-based mechanism. The protein is Biotin synthase of Corynebacterium glutamicum (strain ATCC 13032 / DSM 20300 / JCM 1318 / BCRC 11384 / CCUG 27702 / LMG 3730 / NBRC 12168 / NCIMB 10025 / NRRL B-2784 / 534).